We begin with the raw amino-acid sequence, 151 residues long: Peptide methionine sulfoxide reductase MsrB (151 aa).

The MsrB domain maps to D9–F132. The active-site Nucleophile is C121.

The protein belongs to the MsrB Met sulfoxide reductase family.

The catalysed reaction is L-methionyl-[protein] + [thioredoxin]-disulfide + H2O = L-methionyl-(R)-S-oxide-[protein] + [thioredoxin]-dithiol. The chain is Peptide methionine sulfoxide reductase MsrB from Mycoplasma pneumoniae (strain ATCC 29342 / M129 / Subtype 1) (Mycoplasmoides pneumoniae).